The following is a 378-amino-acid chain: Probable selenide, water dikinase (378 aa).

C33 is a catalytic residue. Residues K36, 63 to 65, D83, D106, and 158 to 160 contribute to the ATP site; these read GLD and GQT. D65 provides a ligand contact to Mg(2+). D106 is a binding site for Mg(2+). Residue D260 participates in Mg(2+) binding.

Belongs to the selenophosphate synthase 1 family. Class I subfamily. Homodimer. Requires Mg(2+) as cofactor.

The catalysed reaction is hydrogenselenide + ATP + H2O = selenophosphate + AMP + phosphate + 2 H(+). In terms of biological role, synthesizes selenophosphate from selenide and ATP. In Caenorhabditis elegans, this protein is Probable selenide, water dikinase (seld-1).